The chain runs to 122 residues: Large ribosomal subunit protein uL14 (122 aa).

The protein belongs to the universal ribosomal protein uL14 family. Part of the 50S ribosomal subunit. Forms a cluster with proteins L3 and L19. In the 70S ribosome, L14 and L19 interact and together make contacts with the 16S rRNA in bridges B5 and B8.

In terms of biological role, binds to 23S rRNA. Forms part of two intersubunit bridges in the 70S ribosome. The protein is Large ribosomal subunit protein uL14 of Nautilia profundicola (strain ATCC BAA-1463 / DSM 18972 / AmH).